The chain runs to 89 residues: Acylphosphatase (89 aa).

Residues 3–88 (TLHLQIEGRV…GEYSGFEKRS (86 aa)) form the Acylphosphatase-like domain. Active-site residues include R18 and N36.

The protein belongs to the acylphosphatase family.

It catalyses the reaction an acyl phosphate + H2O = a carboxylate + phosphate + H(+). The polypeptide is Acylphosphatase (acyP) (Thiobacillus denitrificans (strain ATCC 25259 / T1)).